Reading from the N-terminus, the 749-residue chain is Taperin (749 aa).

Positions 144 to 348 (PAAPCRRGSP…IRPSSKPDME (205 aa)) are disordered. Composition is skewed to polar residues over residues 169-179 (SAATRTPTNRS), 230-239 (LQKTGSNSFT), and 250-266 (VNRS…SPTG). Position 274 is a phosphoserine (Ser274). A compositionally biased stretch (polar residues) spans 323-335 (QRQWVSSATSAND). The span at 337 to 347 (FEIRPSSKPDM) shows a compositional bias: basic and acidic residues. Residues Ser401, Ser457, and Ser501 each carry the phosphoserine modification. Disordered stretches follow at residues 502–586 (EEEA…TTLE), 636–673 (FEYP…SEKP), and 730–749 (LTPA…ALYF). Polar residues-rich tracts occupy residues 534–544 (ELLNRGSNTFT) and 558–570 (HLSQ…QQGA). Over residues 647–668 (EEAEEEEEEEGEEDGEEEEVGP) the composition is skewed to acidic residues.

This sequence belongs to the taperin family. As to quaternary structure, interacts with GRXCR2; the interaction restricts TPRN to the stereocilum basal region. Interacts with actin ACTB; the interaction may stabilize stereocilia. Interacts with CLIC5. Interacts with PTPRQ. TPRN, CLIC5 and PTPQR form concentric rings at the base of stereocilia and may form a complex. Interacts with phosphatase PPP1CA; the interaction results in inhibition of PPP1CA phosphatase activity. Interacts with DNA damage response proteins XRCC6/KU70, XRCC5/KU80, PARP1, TOP1 and TOP2A; these interactions recruit TPRN to sites of DNA damage where it may play a role in DNA repair. In the organ of Corti, expressed in the inner ear hair cell stereocilia and the supporting cells (at protein level). Expressed in the sensory epithelia of the organ of Corti and vestibular end organs and, to a lesser extent, in Reisner's membrane and the spiral ligament (at protein level). At postnatal day 2, expression is detected in cochlea, liver, brain, kidney, heart and lung.

The protein localises to the cell projection. It is found in the stereocilium. Its subcellular location is the microvillus. It localises to the nucleus. The protein resides in the nucleoplasm. The protein localises to the cytoplasm. Functionally, essential for hearing. Required for maintenance of stereocilia on both inner and outer hair cells. Necessary for the integrity of the stereociliary rootlet. May act as an actin cytoskeleton regulator involved in the regulation of actin dynamics at the pointed end in hair cells. Forms rings at the base of stereocilia and binds actin filaments in the stereocilia which may stabilize the stereocilia. Acts as a strong inhibitor of PPP1CA phosphatase activity. Recruited to sites of DNA damage and may play a role in DNA damage repair. This chain is Taperin (Tprn), found in Mus musculus (Mouse).